Here is a 174-residue protein sequence, read N- to C-terminus: ATP-dependent protease subunit HslV (174 aa).

Residue threonine 2 is part of the active site. Na(+) is bound by residues glycine 157, cysteine 160, and threonine 163.

It belongs to the peptidase T1B family. HslV subfamily. As to quaternary structure, a double ring-shaped homohexamer of HslV is capped on each side by a ring-shaped HslU homohexamer. The assembly of the HslU/HslV complex is dependent on binding of ATP.

The protein resides in the cytoplasm. The catalysed reaction is ATP-dependent cleavage of peptide bonds with broad specificity.. Allosterically activated by HslU binding. In terms of biological role, protease subunit of a proteasome-like degradation complex believed to be a general protein degrading machinery. The polypeptide is ATP-dependent protease subunit HslV (Shewanella putrefaciens (strain CN-32 / ATCC BAA-453)).